The chain runs to 280 residues: MEVRQGANARDVKGYDTERLRNDFLIQNLFPADDFKLVYSQIDRIIVGGCMPVNKELTLEAGSELKAAYFLERREMGIFNVGGNGSVIVDGTEYKFKYRDGLYIGMGSKEIKFKSEDSSKPAKFYFNSTPAHKTYPTVFIDPEKDIKDEFKLQLGSVEGCNKRLNRKYILPGQVETCQLEMGITTLEPGSVWNTMPCHTHDRRMEVYFYFEIPEEDIVVHYMGEPTETRHIIMRSEEAVISPSWSIHSASATHAYAFIWGMAGENQDFDDMDWVDMKDLK.

His-198, His-200, Glu-205, and His-247 together coordinate Zn(2+).

Belongs to the KduI family. Zn(2+) serves as cofactor.

The enzyme catalyses 5-dehydro-4-deoxy-D-glucuronate = 3-deoxy-D-glycero-2,5-hexodiulosonate. The protein operates within glycan metabolism; pectin degradation; 2-dehydro-3-deoxy-D-gluconate from pectin: step 4/5. Catalyzes the isomerization of 5-dehydro-4-deoxy-D-glucuronate to 3-deoxy-D-glycero-2,5-hexodiulosonate. The protein is 4-deoxy-L-threo-5-hexosulose-uronate ketol-isomerase of Lachnospira eligens (strain ATCC 27750 / DSM 3376 / VPI C15-48 / C15-B4) (Eubacterium eligens).